A 215-amino-acid polypeptide reads, in one-letter code: MKAYQREFIEFALERQVLRFGEFTLKSGRISPYFFNAGLFNTGRDLARLGRFYAAALVDSGIDYDLLFGPAYKGIPIATTTAVALCEHHNIDIPYCFNRKEKKDHGEGGSLVGSELKGRVMLVDDVITAGTAIRESMEIIEAHQAQLAGVLIALDRQEKGKGELSAIQEVERDFGCGIVAIIKLADLISYLSEKPRMEAQLAAVSQYREQYGIEA.

K26 is a 5-phospho-alpha-D-ribose 1-diphosphate binding site. 34-35 (FF) provides a ligand contact to orotate. Residues 72 to 73 (YK), R99, K100, K103, H105, and 124 to 132 (DDVITAGTA) each bind 5-phospho-alpha-D-ribose 1-diphosphate. T128 and R156 together coordinate orotate.

It belongs to the purine/pyrimidine phosphoribosyltransferase family. PyrE subfamily. In terms of assembly, homodimer. Mg(2+) is required as a cofactor.

The enzyme catalyses orotidine 5'-phosphate + diphosphate = orotate + 5-phospho-alpha-D-ribose 1-diphosphate. Its pathway is pyrimidine metabolism; UMP biosynthesis via de novo pathway; UMP from orotate: step 1/2. Functionally, catalyzes the transfer of a ribosyl phosphate group from 5-phosphoribose 1-diphosphate to orotate, leading to the formation of orotidine monophosphate (OMP). This Shewanella oneidensis (strain ATCC 700550 / JCM 31522 / CIP 106686 / LMG 19005 / NCIMB 14063 / MR-1) protein is Orotate phosphoribosyltransferase.